A 128-amino-acid chain; its full sequence is Glycine cleavage system H protein (128 aa).

The Lipoyl-binding domain maps to 25–107 (TVRVGITDFA…YEGGWLFEIT (83 aa)). At Lys-66 the chain carries N6-lipoyllysine.

It belongs to the GcvH family. As to quaternary structure, the glycine cleavage system is composed of four proteins: P, T, L and H. (R)-lipoate serves as cofactor.

Functionally, the glycine cleavage system catalyzes the degradation of glycine. The H protein shuttles the methylamine group of glycine from the P protein to the T protein. The sequence is that of Glycine cleavage system H protein from Micrococcus luteus (strain ATCC 4698 / DSM 20030 / JCM 1464 / CCM 169 / CCUG 5858 / IAM 1056 / NBRC 3333 / NCIMB 9278 / NCTC 2665 / VKM Ac-2230) (Micrococcus lysodeikticus).